The chain runs to 511 residues: Ribonuclease Y (511 aa).

The helical transmembrane segment at 3–23 (VGILIGIIILGVVGFIQYTLI) threads the bilayer. In terms of domain architecture, KH spans 201 to 286 (TVHVVALPND…EMVERAIKDV (86 aa)). Positions 327 to 420 (VLKHSIEVSY…VQAADAISAA (94 aa)) constitute an HD domain.

It belongs to the RNase Y family.

The protein resides in the cell membrane. In terms of biological role, endoribonuclease that initiates mRNA decay. This is Ribonuclease Y from Clostridium perfringens (strain ATCC 13124 / DSM 756 / JCM 1290 / NCIMB 6125 / NCTC 8237 / Type A).